The sequence spans 360 residues: MKISLGLIYGGKSAEHNVSLQTALAVTKALNTEKFDIHPIYITEEGEWLRGEKLTEPVSNVRMLQFEQNAKTFLPTSLNESMFPQPTSADEKIDVVFPLLHGPNGEDGTMQGLLELLNIPYVGNGVLASAAGMDKVMMKDVFAQAGLAQAKHLSFNKKDYEKATPDSLEQVEQVLGYPCFVKPANMGSSVGISKCRSKEELQTAFDLAFQYDRRVVVEEGVVGREIEIGVLGNDEPKCSVVGEIAPKTDFYDYKAKYEDGDTDLIIPASVSEDEYKTIHDMAIKAFKSLDGSGLVRADFFLTEKGEVLINEVNTMPGFTPFSMFPLLWKHTGVEYPELIEKLVSLAIERHQEKQTIKTTF.

The ATP-grasp domain maps to 139-344 (KDVFAQAGLA…YPELIEKLVS (206 aa)). 172–227 (EQVLGYPCFVKPANMGSSVGISKCRSKEELQTAFDLAFQYDRRVVVEEGVVGREIE) provides a ligand contact to ATP. Positions 298, 311, and 313 each coordinate Mg(2+).

It belongs to the D-alanine--D-alanine ligase family. Requires Mg(2+) as cofactor. It depends on Mn(2+) as a cofactor.

It localises to the cytoplasm. It catalyses the reaction 2 D-alanine + ATP = D-alanyl-D-alanine + ADP + phosphate + H(+). Its pathway is cell wall biogenesis; peptidoglycan biosynthesis. Functionally, cell wall formation. The chain is D-alanine--D-alanine ligase from Bacillus pumilus (strain SAFR-032).